A 367-amino-acid chain; its full sequence is Teichoic acid glycerol-phosphate primase (367 aa).

It belongs to the CDP-glycerol glycerophosphotransferase family.

It is found in the cell membrane. It catalyses the reaction N-acetyl-beta-D-mannosaminyl-(1-&gt;4)-N-acetyl-alpha-D-glucosaminyl di-trans,octa-cis-undecaprenyl diphosphate + CDP-glycerol = 4-O-[(2R)-glycerylphospho]-N-acetyl-beta-D-mannosaminyl-(1-&gt;4)-N-acetyl-alpha-D-glucosaminyl di-trans,octa-cis-undecaprenyl diphosphate + CMP + H(+). The protein operates within cell wall biogenesis; poly(ribitol phosphate) teichoic acid biosynthesis. Functionally, catalyzes the addition of a single glycerol phosphate residue to the prenoldiphosphate-linked disaccharide. This Staphylococcus aureus (strain NCTC 8325 / PS 47) protein is Teichoic acid glycerol-phosphate primase (tarB).